A 427-amino-acid chain; its full sequence is Putative acyl-CoA thioester hydrolase YbhC (427 aa).

Residues 1–21 form the signal peptide; sequence MNTFSVSRLALALAFGVTLTA. Residue Cys-22 is the site of N-palmitoyl cysteine attachment. Cys-22 carries S-diacylglycerol cysteine lipidation. Residues 23–42 are disordered; that stretch reads SSTPPDQRPSDQTAPGTSSR. Cys-185 and Cys-197 are joined by a disulfide. Asp-285 serves as the catalytic Nucleophile. Arg-345 serves as a coordination point for substrate.

It belongs to the pectinesterase family.

It localises to the cell outer membrane. Functionally, putative thioesterase. Does not bind pectin, and has no pectinesterase activity. This chain is Putative acyl-CoA thioester hydrolase YbhC (ybhC), found in Escherichia coli (strain K12).